The sequence spans 372 residues: Queuine tRNA-ribosyltransferase (372 aa).

Residue D92 is the Proton acceptor of the active site. Substrate contacts are provided by residues 92–96 (DSGGY), D146, Q188, and G215. The RNA binding stretch occupies residues 246–252 (GIGSLRE). Residue D265 is the Nucleophile of the active site. Residues 270-274 (TRLGR) form an RNA binding; important for wobble base 34 recognition region. The Zn(2+) site is built by C303, C305, C308, and H334.

The protein belongs to the queuine tRNA-ribosyltransferase family. As to quaternary structure, homodimer. Within each dimer, one monomer is responsible for RNA recognition and catalysis, while the other monomer binds to the replacement base PreQ1. The cofactor is Zn(2+).

It carries out the reaction 7-aminomethyl-7-carbaguanine + guanosine(34) in tRNA = 7-aminomethyl-7-carbaguanosine(34) in tRNA + guanine. It participates in tRNA modification; tRNA-queuosine biosynthesis. Functionally, catalyzes the base-exchange of a guanine (G) residue with the queuine precursor 7-aminomethyl-7-deazaguanine (PreQ1) at position 34 (anticodon wobble position) in tRNAs with GU(N) anticodons (tRNA-Asp, -Asn, -His and -Tyr). Catalysis occurs through a double-displacement mechanism. The nucleophile active site attacks the C1' of nucleotide 34 to detach the guanine base from the RNA, forming a covalent enzyme-RNA intermediate. The proton acceptor active site deprotonates the incoming PreQ1, allowing a nucleophilic attack on the C1' of the ribose to form the product. After dissociation, two additional enzymatic reactions on the tRNA convert PreQ1 to queuine (Q), resulting in the hypermodified nucleoside queuosine (7-(((4,5-cis-dihydroxy-2-cyclopenten-1-yl)amino)methyl)-7-deazaguanosine). This Prochlorococcus marinus (strain MIT 9312) protein is Queuine tRNA-ribosyltransferase.